The sequence spans 488 residues: Lysine--tRNA ligase (488 aa).

Residues Glu397 and Glu404 each contribute to the Mg(2+) site.

It belongs to the class-II aminoacyl-tRNA synthetase family. Homodimer. Mg(2+) serves as cofactor.

It localises to the cytoplasm. It catalyses the reaction tRNA(Lys) + L-lysine + ATP = L-lysyl-tRNA(Lys) + AMP + diphosphate. The protein is Lysine--tRNA ligase (lysS) of Mycoplasmopsis fermentans (strain ATCC 19989 / NBRC 14854 / NCTC 10117 / PG18) (Mycoplasma fermentans).